Reading from the N-terminus, the 471-residue chain is Putative F-box protein At5g36200 (471 aa).

One can recognise an F-box domain in the interval 1-46 (MAMSDLPNDLVEEIISRVPVKSIRAVSSTCKNWNTLSNDHSFTRKL).

This is Putative F-box protein At5g36200 from Arabidopsis thaliana (Mouse-ear cress).